A 434-amino-acid polypeptide reads, in one-letter code: V-type ATP synthase beta chain (434 aa).

Belongs to the ATPase alpha/beta chains family.

Its function is as follows. Produces ATP from ADP in the presence of a proton gradient across the membrane. The V-type beta chain is a regulatory subunit. This chain is V-type ATP synthase beta chain (atpB), found in Borreliella burgdorferi (strain ATCC 35210 / DSM 4680 / CIP 102532 / B31) (Borrelia burgdorferi).